A 382-amino-acid polypeptide reads, in one-letter code: MQDAAPRLTFTLRDEERLMMKIGVFVPIGNNGWLISTHAPQYMPTFELNKAIVQKAEHYHFDFALSMIKLRGFGGKTEFWDHNLESFTLMAGLAAVTSRIQIYATAATLTLPPAIVARMAATIDSISGGRFGVNLVTGWQKPEYEQMGIWPGDDYFSRRYDYLTEYVQVLRDLWGSGKSDFKGDFFTMDDCRVSPQPSVPMKVICAGQSDAGMAFSARYADFNFCFGKGVNTPTAFAPTAARMKQAAEQTGRDVGSYVLFMVIADETDDAARAKWEHYKAGADEEALSWLTEQSQKDTRSGTDTNVRQMADPTSAVNINMGTLVGSYASVARMLDEVASVPGAEGVLLTFDDFLSGIENFGERIQPLMQCRAHLPALTQEVA.

FMN is bound by residues 68-69 (IK), N134, E143, 159-160 (RY), and S209.

This sequence belongs to the NtaA/SnaA/DszA monooxygenase family. RutA subfamily.

It carries out the reaction uracil + FMNH2 + NADH + O2 = (Z)-3-ureidoacrylate + FMN + NAD(+) + H2O + H(+). The enzyme catalyses thymine + FMNH2 + NADH + O2 = (Z)-2-methylureidoacrylate + FMN + NAD(+) + H2O + H(+). Catalyzes the pyrimidine ring opening between N-3 and C-4 by an unusual flavin hydroperoxide-catalyzed mechanism, adding oxygen atoms in the process to yield ureidoacrylate peracid, that immediately reacts with FMN forming ureidoacrylate and FMN-N(5)-oxide. The FMN-N(5)-oxide reacts spontaneously with NADH to produce FMN. Requires the flavin reductase RutF to regenerate FMN in vivo. The chain is Pyrimidine monooxygenase RutA from Escherichia coli O45:K1 (strain S88 / ExPEC).